The chain runs to 379 residues: Epoxyqueuosine reductase (379 aa).

Catalysis depends on aspartate 139, which acts as the Proton donor. Residues 181 to 213 (IPLPVDQPVEEGCGKCVACMTICPTGAIVEPYT) enclose the 4Fe-4S ferredoxin-type domain. Cysteine 193, cysteine 196, cysteine 199, cysteine 203, cysteine 219, cysteine 246, cysteine 249, and cysteine 253 together coordinate [4Fe-4S] cluster.

The protein belongs to the QueG family. In terms of assembly, monomer. Requires cob(II)alamin as cofactor. It depends on [4Fe-4S] cluster as a cofactor.

Its subcellular location is the cytoplasm. The catalysed reaction is epoxyqueuosine(34) in tRNA + AH2 = queuosine(34) in tRNA + A + H2O. The protein operates within tRNA modification; tRNA-queuosine biosynthesis. Functionally, catalyzes the conversion of epoxyqueuosine (oQ) to queuosine (Q), which is a hypermodified base found in the wobble positions of tRNA(Asp), tRNA(Asn), tRNA(His) and tRNA(Tyr). The protein is Epoxyqueuosine reductase of Shigella dysenteriae serotype 1 (strain Sd197).